The following is a 543-amino-acid chain: T-complex protein 1 subunit eta (543 aa).

Met-1 is subject to N-acetylmethionine. Gly-41 provides a ligand contact to ADP. ATP is bound at residue Gly-41. Lys-67 carries the post-translational modification N6-acetyllysine. Asp-92 is a Mg(2+) binding site. The ADP site is built by Gly-93, Thr-94, Thr-95, Ser-96, Ser-164, and Ser-165. Gly-93 serves as a coordination point for ATP. Ser-96 is an ATP binding site. Lys-250 and Lys-320 each carry N6-acetyllysine. ATP contacts are provided by Arg-398 and Gly-409. Gly-409 lines the ADP pocket. A Glycyl lysine isopeptide (Lys-Gly) (interchain with G-Cter in SUMO2) cross-link involves residue Lys-430. ADP is bound by residues Glu-494 and Arg-499. Arg-499 lines the ATP pocket. The disordered stretch occupies residues 524 to 543; sequence RSTVDAPTAAGRGRGRGRPH. Arg-535 bears the Omega-N-methylarginine mark.

The protein belongs to the TCP-1 chaperonin family. As to quaternary structure, component of the chaperonin-containing T-complex (TRiC), a hexadecamer composed of two identical back-to-back stacked rings enclosing a protein folding chamber. Each ring is made up of eight different subunits: TCP1/CCT1, CCT2, CCT3, CCT4, CCT5, CCT6A/CCT6, CCT7, CCT8. Interacts with PACRG. Interacts with DLEC1.

The protein resides in the cytoplasm. It catalyses the reaction ATP + H2O = ADP + phosphate + H(+). Its function is as follows. Component of the chaperonin-containing T-complex (TRiC), a molecular chaperone complex that assists the folding of actin, tubulin and other proteins upon ATP hydrolysis. The TRiC complex mediates the folding of WRAP53/TCAB1, thereby regulating telomere maintenance. This is T-complex protein 1 subunit eta (CCT7) from Homo sapiens (Human).